We begin with the raw amino-acid sequence, 556 residues long: MSVSAFNRRWAAVILEALTRHGVRHVCIAPGSRSTPLTLAAAENPAFIHHTHFDERGLGHLALGLAKVSQQPVAVIVTSGTAVANLYPALIEAGLTGEKLILLTADRPPELIDCGANQAIRQAGMFASHPSQTLSLPRPTQDIPARWLVSTIDNALAMLHAGALHINCPFAEPLYGDMNDTGLVWQQRLGDWWQDEKPWLREARRLASDKQRDWFFWRQKRGVVVAGRMSAEEGKKVAQWAQTLGWPLIGDVLSQTGQPLPCADLWLGNAKAVTELQQAQIVVQLGSSLTGKRLLQWQATCEPEEYWVIDNIEGRLDPAHHRGRRLVAKIADWLELHPAEKRKPWCVEIPRLAELAWQRVVAQRDTFGEAQLAHRIRDYLPEQGQLFVGNSLVVRLIDALSQLPAGYPVYSNRGASGIDGLLSTAAGVQRASAKSTLAIVGDLSALYDLNALALLRQVSAPFVLIVVNNNGGQIFSLLPTPQSKRERFYLMPQNVHFDHAAAMFNLRYHRPENWEELESALAGAWRTPAATVIELVVNDTDGAQTLQQLLAQVSHL.

Belongs to the TPP enzyme family. MenD subfamily. Homodimer. Requires Mg(2+) as cofactor. Mn(2+) is required as a cofactor. It depends on thiamine diphosphate as a cofactor.

It carries out the reaction isochorismate + 2-oxoglutarate + H(+) = 5-enolpyruvoyl-6-hydroxy-2-succinyl-cyclohex-3-ene-1-carboxylate + CO2. Its pathway is quinol/quinone metabolism; 1,4-dihydroxy-2-naphthoate biosynthesis; 1,4-dihydroxy-2-naphthoate from chorismate: step 2/7. It participates in quinol/quinone metabolism; menaquinone biosynthesis. In terms of biological role, catalyzes the thiamine diphosphate-dependent decarboxylation of 2-oxoglutarate and the subsequent addition of the resulting succinic semialdehyde-thiamine pyrophosphate anion to isochorismate to yield 2-succinyl-5-enolpyruvyl-6-hydroxy-3-cyclohexene-1-carboxylate (SEPHCHC). In Salmonella heidelberg (strain SL476), this protein is 2-succinyl-5-enolpyruvyl-6-hydroxy-3-cyclohexene-1-carboxylate synthase.